The primary structure comprises 103 residues: Acylphosphatase-2 (103 aa).

Position 2 is an N-acetylserine (Ser2). In terms of domain architecture, Acylphosphatase-like spans 13–103 (SVDYEVFGRV…LDFSGFSTRY (91 aa)). Residues Arg28 and Asn46 contribute to the active site.

Belongs to the acylphosphatase family.

It carries out the reaction an acyl phosphate + H2O = a carboxylate + phosphate + H(+). Its function is as follows. Its physiological role is not yet clear. This chain is Acylphosphatase-2 (ACYP2), found in Gallus gallus (Chicken).